The sequence spans 101 residues: Protein S100-A7A (101 aa).

2 consecutive EF-hand domains span residues 13-48 (MIDM…SACD) and 50-85 (KGIH…IAAD). Positions 18, 28, and 38 each coordinate Zn(2+). Positions 63 and 65 each coordinate Ca(2+). E66 is a Zn(2+) binding site. Ca(2+) is bound by residues D67, K69, and E74. Zn(2+) is bound by residues H87 and H91.

Belongs to the S-100 family. In terms of tissue distribution, overexpressed in psoriasis.

It is found in the cytoplasm. May be involved in epidermal differentiation and inflammation and might therefore be important for the pathogenesis of psoriasis and other diseases. The polypeptide is Protein S100-A7A (S100A7A) (Homo sapiens (Human)).